Reading from the N-terminus, the 548-residue chain is Biotin-dependent acetyl-/propionyl-coenzyme A carboxylase beta5 subunit (548 aa).

The disordered stretch occupies residues 1 to 23; sequence MTSVTDRSAHSAERSTEHTIDIH. A compositionally biased stretch (basic and acidic residues) spans 7–21; the sequence is RSAHSAERSTEHTID. Residues 25 to 281 form the CoA carboxyltransferase N-terminal domain; sequence TAGKLAELHK…NNSTDAPRYQ (257 aa). The CoA carboxyltransferase C-terminal domain maps to 295–541; sequence DEDLELDTLI…ERKIAQLPPK (247 aa).

Belongs to the AccD/PCCB family. As to quaternary structure, forms homohexamers. The biotin-dependent acyl-CoA carboxylase complex is composed of AccA3, which contains the biotin carboxylase (BC) and biotin carboxyl carrier protein (BCCP) domains, and AccD5, which contains the carboxyl transferase (CT) domain. The AccA3/AccD5 complex forms a dodecamer, and can associate with the epsilon subunit AccE5 (Rv3280), which stimulates carboxylation by the complex. Is also part of the long-chain acyl-CoA carboxylase (LCC) complex, which is composed of AccA3, AccD4, AccD5 and AccE5. The four subunits are essential for activity, but AccD5, together with AccE5, probably plays a structural role rather than a catalytic one.

The enzyme catalyses N(6)-carboxybiotinyl-L-lysyl-[protein] + acetyl-CoA = N(6)-biotinyl-L-lysyl-[protein] + malonyl-CoA. The catalysed reaction is N(6)-carboxybiotinyl-L-lysyl-[protein] + propanoyl-CoA = methylmalonyl-CoA + N(6)-biotinyl-L-lysyl-[protein]. Its pathway is lipid metabolism; mycolic acid biosynthesis. Carboxylase activity of the AccA3/AccD5 complex is stimulated by interaction with AccE5. Functionally, component of a biotin-dependent acyl-CoA carboxylase complex. This subunit transfers the CO2 from carboxybiotin to the CoA ester substrate. When associated with the alpha3 subunit AccA3, is involved in the carboxylation of acetyl-CoA and propionyl-CoA, with a preference for propionyl-CoA. Is also required for the activity of the long-chain acyl-CoA carboxylase (LCC) complex. The protein is Biotin-dependent acetyl-/propionyl-coenzyme A carboxylase beta5 subunit of Mycobacterium tuberculosis (strain ATCC 25618 / H37Rv).